The chain runs to 315 residues: MSQTTPAVRTFQDLILALQNYWAEQGCVVLQPYDMEVGAGTFHTATFLRAIGPETWNAAYVQPSRRPTDGRYGENPNRLQHYYQFQVVLKPNPENFQELYLGSLKAIGIDPLVHDIRFVEDNWESPTLGAWGLGWEIWLNGMEVTQFTYFQQVGGIECYPVTGEITYGLERLAMYLQGVDSVYDLIWTDGPFGKVTYGDVFHQNEVEQSTFNFEHANVPKLFELFDFYESEANRLIELELPLPTYEMVLKASHTFNLLDARRAISVTERQRYILRVRTLARAVAQSYLQARARLGFPMATPELRDEVLAKLKEAE.

The protein belongs to the class-II aminoacyl-tRNA synthetase family. Tetramer of two alpha and two beta subunits.

The protein localises to the cytoplasm. It catalyses the reaction tRNA(Gly) + glycine + ATP = glycyl-tRNA(Gly) + AMP + diphosphate. The polypeptide is Glycine--tRNA ligase alpha subunit (Pseudomonas paraeruginosa (strain DSM 24068 / PA7) (Pseudomonas aeruginosa (strain PA7))).